Reading from the N-terminus, the 436-residue chain is MTATWEKKEGNEGVLSVTVPAEKVDKAIDQAFKKVVKQINVPGFRKGKVPRPIFEQRFGVEALYQDAVDILLPEAYGEAIDETGIKPVDQPEINVTSIEKGKEMTFEANVVVEPEVQLGDYKGLEVEKQDVELTDEELQESIDHQLGHLAEMVVKEDGAIENGDTVNIDFDGYVDGEQFEGGQAEGYDLEIGSGSFIPGFEEQLVGVKTGEEKDVNVTFPEEYHAEELAGKEATFKTKVNEIKYKDVPELTDEIANELDSEANTVDEYKENLRKRLTEQKETDAENNQKEEAINKAANNASIDVPDAMINTELDRMVQEFGQRMQQQGLNLETYFQISGQDESQLREQMKDDAEERVKTNLTLTAIADAEDIEVSDDDIDKELEKMSEQFNISVEDIKQTLGNTDIVKNDVRIQKVIDLLVDEAKLVEPSKDDSEA.

The PPIase FKBP-type domain occupies 163-248 (GDTVNIDFDG…VNEIKYKDVP (86 aa)).

The protein belongs to the FKBP-type PPIase family. Tig subfamily.

The protein resides in the cytoplasm. It catalyses the reaction [protein]-peptidylproline (omega=180) = [protein]-peptidylproline (omega=0). In terms of biological role, involved in protein export. Acts as a chaperone by maintaining the newly synthesized protein in an open conformation. Functions as a peptidyl-prolyl cis-trans isomerase. In Staphylococcus saprophyticus subsp. saprophyticus (strain ATCC 15305 / DSM 20229 / NCIMB 8711 / NCTC 7292 / S-41), this protein is Trigger factor.